The following is a 159-amino-acid chain: Transcriptional repressor NrdR (159 aa).

Residues 3 to 34 (CPFCGSDNTSVKDSRAAEDDTAVRRRRVCESC) fold into a zinc finger. Positions 49–139 (IIVVKRDGKR…VYRDFKDPSD (91 aa)) constitute an ATP-cone domain.

Belongs to the NrdR family. Zn(2+) is required as a cofactor.

Negatively regulates transcription of bacterial ribonucleotide reductase nrd genes and operons by binding to NrdR-boxes. This is Transcriptional repressor NrdR from Hyphomonas neptunium (strain ATCC 15444).